The primary structure comprises 322 residues: Cytochrome f (322 aa).

The first 35 residues, 1–35, serve as a signal peptide directing secretion; it reads MQTRNTFSWTWIREEITRSISVSLMIYIITWSSIS. Heme is bound by residues Tyr-38, Cys-58, Cys-61, and His-62. The chain crosses the membrane as a helical span at residues 288–308; that stretch reads VQGLLFFLGSVVLAQIFLVLK.

The protein belongs to the cytochrome f family. As to quaternary structure, the 4 large subunits of the cytochrome b6-f complex are cytochrome b6, subunit IV (17 kDa polypeptide, petD), cytochrome f and the Rieske protein, while the 4 small subunits are PetG, PetL, PetM and PetN. The complex functions as a dimer. It depends on heme as a cofactor.

The protein localises to the plastid. Its subcellular location is the chloroplast thylakoid membrane. In terms of biological role, component of the cytochrome b6-f complex, which mediates electron transfer between photosystem II (PSII) and photosystem I (PSI), cyclic electron flow around PSI, and state transitions. This Aethionema cordifolium (Lebanon stonecress) protein is Cytochrome f.